Reading from the N-terminus, the 224-residue chain is Inhibitor of apoptosis protein (224 aa).

The stretch at 29 to 92 (IDARNQSFAI…GFWSRNCGFM (64 aa)) is one BIR repeat. Residues Cys-62, Cys-65, His-82, and Cys-89 each contribute to the Zn(2+) site.

The protein belongs to the asfivirus IAP family. In terms of assembly, interacts with subunit p17 of host CASP3.

Its subcellular location is the host cytoplasm. It localises to the virion. Its function is as follows. Prevent apoptosis of host cell by inhibiting caspase-3/CASP3 activation to promote the viral replication. Also induces the activation of host NF-kappaB. The polypeptide is Inhibitor of apoptosis protein (p27) (African swine fever virus (isolate Pig/Haiti/H811/1981) (ASFV)).